Here is a 98-residue protein sequence, read N- to C-terminus: uncharacterized protein (98 aa).

This is an uncharacterized protein from Sulfolobus islandicus filamentous virus (isolate Iceland/Hveragerdi) (SIFV).